Consider the following 395-residue polypeptide: ATP phosphoribosyltransferase regulatory subunit (395 aa).

Belongs to the class-II aminoacyl-tRNA synthetase family. HisZ subfamily. Heteromultimer composed of HisG and HisZ subunits.

It localises to the cytoplasm. It participates in amino-acid biosynthesis; L-histidine biosynthesis; L-histidine from 5-phospho-alpha-D-ribose 1-diphosphate: step 1/9. Required for the first step of histidine biosynthesis. May allow the feedback regulation of ATP phosphoribosyltransferase activity by histidine. This Pseudomonas syringae pv. syringae (strain B728a) protein is ATP phosphoribosyltransferase regulatory subunit.